Reading from the N-terminus, the 86-residue chain is Large ribosomal subunit protein bL31B (86 aa).

The protein belongs to the bacterial ribosomal protein bL31 family. Type B subfamily. In terms of assembly, part of the 50S ribosomal subunit.

The polypeptide is Large ribosomal subunit protein bL31B (Streptococcus equi subsp. zooepidemicus (strain H70)).